The primary structure comprises 196 residues: ATP-dependent Clp protease proteolytic subunit (196 aa).

Ser101 (nucleophile) is an active-site residue. Residue His126 is part of the active site.

It belongs to the peptidase S14 family. In terms of assembly, component of the chloroplastic Clp protease core complex.

The protein localises to the plastid. Its subcellular location is the chloroplast stroma. The catalysed reaction is Hydrolysis of proteins to small peptides in the presence of ATP and magnesium. alpha-casein is the usual test substrate. In the absence of ATP, only oligopeptides shorter than five residues are hydrolyzed (such as succinyl-Leu-Tyr-|-NHMec, and Leu-Tyr-Leu-|-Tyr-Trp, in which cleavage of the -Tyr-|-Leu- and -Tyr-|-Trp bonds also occurs).. Cleaves peptides in various proteins in a process that requires ATP hydrolysis. Has a chymotrypsin-like activity. Plays a major role in the degradation of misfolded proteins. In Lactuca sativa (Garden lettuce), this protein is ATP-dependent Clp protease proteolytic subunit.